Here is an 819-residue protein sequence, read N- to C-terminus: Nonribosomal peptide synthetase 9 (819 aa).

The adenylation (A) domain stretch occupies residues 202 to 591; the sequence is LQAPTQHAVR…GRKDTQAKIR (390 aa). Residues 722–798 enclose the Carrier domain; sequence QPRNERERLI…SLAEFLSSSS (77 aa). Position 759 is an O-(pantetheine 4'-phosphoryl)serine (Ser-759).

The protein belongs to the NRP synthetase family.

Its pathway is secondary metabolite biosynthesis. Nonribosomal peptide synthetase; part of the Fg3_54/C64 gene cluster that mediates the biosynthesis of the octapeptide fusaoctaxin A, a virulence factor that is required for cell-to-cell invasiveness of plant host. The 2 nonribosomal peptide synthetases NRPS9 and NRPS5 form an assembly line which likely utilizes GABA as a starter unit (loaded on the unique module M1 of NRPS9) and sequentially incorporates seven extender units composed of the residues L-Ala, L-allo-Ile, L-Ser, L-Val, L-Ser, L-Leu and L-Leu, respectively. During the process, each of the residues that are tethered on modules M3-M7 of NRPS5 containing an E domain can undergo an epimerization reaction to produce a D-configuration before the transpeptidation reaction occurs. The elongation of the peptidyl chain might be terminated by module M8-mediated L-Leu incorporation, followed by R domain-catalyzed 4 electron reduction to release the resulting octapeptide from the assembly line as an alcohol. Fusaoctaxin A is cleaved by the cluster specific ABC transporter FGM5 to the pentapeptide fusapentaxin A and the tripeptide fusatrixin A. The other enzymes from the cluster, FGM1, FGM2, FGM3 and FGM9 seem not to be involved in the biosynthesis of fusaoctaxin A and their functions have still to be determined. The sequence is that of Nonribosomal peptide synthetase 9 from Gibberella zeae (strain ATCC MYA-4620 / CBS 123657 / FGSC 9075 / NRRL 31084 / PH-1) (Wheat head blight fungus).